Consider the following 1337-residue polypeptide: Partitioning defective 3 homolog (1337 aa).

A Phosphoserine modification is found at S25. Disordered stretches follow at residues 81 to 109 (EQDP…SELG) and 143 to 263 (SSDP…LENM). T91 is subject to Phosphothreonine. Low complexity predominate over residues 91–100 (TSASSTGTQS). Composition is skewed to polar residues over residues 150 to 163 (GLST…FSSE) and 171 to 188 (TRWS…TGSP). A phosphoserine mark is found at S156 and S174. The segment covering 190 to 203 (TCDRKKDENYRSLP) has biased composition (basic and acidic residues). A compositionally biased stretch (polar residues) spans 207 to 224 (SSWSNQFQRDNARSSLSA). Residues 271 to 359 (MVKLVQVPND…ARVIWFHVVP (89 aa)) form the PDZ 1 domain. Residue S383 is modified to Phosphoserine. The segment at 397-441 (NAPQALPRAPRLSQPPEQLDAHPRLPHSAHASTKPPTAPALAPPN) is disordered. 2 PDZ domains span residues 461 to 546 (NIQL…LVFR) and 590 to 677 (EVPL…GMIQ). Phosphotyrosine is present on Y489. Phosphoserine is present on residues S692, S695, S715, S728, S809, and S827. The segment at 712–936 (RRISHSLYSG…AAIDKSYDKP (225 aa)) is interaction with PRKCI and PRKCZ. Position 834 is an N6-acetyllysine (K834). Residue S837 is modified to Phosphoserine. Position 851 is an N6-acetyllysine (K851). Phosphoserine is present on residues S852 and S873. Disordered regions lie at residues 866 to 888 (VDDQ…KKSS), 932 to 1015 (SYDK…AKKG), 1028 to 1055 (KHRK…DRVR), 1110 to 1271 (LNAR…LGGH), and 1284 to 1337 (LLRQ…PFYS). At K885 the chain carries N6-acetyllysine. The interval 935–1337 (KPMVDDDDEG…TPEKGRPFYS (403 aa)) is interaction with FRMD4A. Positions 939–953 (DDDDEGMETLEEDTE) are enriched in acidic residues. S962 carries the phosphoserine; by AURKA modification. Phosphoserine is present on residues S971 and S973. Basic and acidic residues-rich tracts occupy residues 981–1009 (DPEK…EKDK) and 1030–1043 (RKDD…RIKI). A Phosphoserine modification is found at S1046. Residues 1050–1082 (EEDRVRMKEEQERIQAKTREFRERQARERDYAE) adopt a coiled-coil conformation. Over residues 1138 to 1147 (PGDSNRSTPS) the composition is skewed to polar residues. Residues 1148–1175 (NHDRIQRLRQEFQQAKQDEDVEDRRRTY) show a composition bias toward basic and acidic residues. 3 coiled-coil regions span residues 1149–1172 (HDRI…EDRR), 1199–1222 (VQVQ…YSSL), and 1278–1299 (MLET…LKKQ). A compositionally biased stretch (low complexity) spans 1180 to 1203 (SWSSSRPASQSGRHSVSVEVQVQR). A compositionally biased stretch (polar residues) spans 1219-1240 (YSSLPRQSRKNASSVSQDSWEQ). The segment covering 1284–1296 (LLRQEQRRKEQQL) has biased composition (basic and acidic residues). Over residues 1318–1327 (SQVARLNRLQ) the composition is skewed to polar residues. Positions 1328-1337 (TPEKGRPFYS) are enriched in basic and acidic residues. K1331 bears the N6-acetyllysine mark.

It belongs to the PAR3 family. Component of a complex whose core is composed of ARHGAP17, AMOT, PALS1, PATJ and PARD3/PAR3. Interacts (via PDZ 1 domain) with PARD6A, PARD6B and F11R/JAM1. Interacts with AURKA, AURKB and SIRT2. Interacts with PRKCI. Interacts with PRKCZ. Part of a complex with PARD6A or PARD6B, PRKCI or PRKCZ and CDC42 or RAC1. Interacts with LIMK2 and CDH5. Component of the Par polarity complex, composed of at least phosphorylated PRKCZ, PARD3 and TIAM1. Directly interacts with TIAM1 and TIAM2. Interacts with ECT2 and FBF1. Interacts (via PDZ 3 domain) with PTEN (via C-terminus). Interacts (via coiled-coil domain) with FRMD4A. Found in a complex with PARD3, CYTH1 and FRMD4A. Interacts with SAPCD2. Interacts with PRKCA. As to quaternary structure, interacts with PRKCZ. Post-translationally, acetylated. Deacetylated by SIRT2, thereby inhibiting Schwann cell peripheral myelination. In terms of processing, phosphorylation at Ser-827 by PRKCZ and PRKCI occurs at the most apical tip of epithelial cell-cell contacts during the initial phase of tight junction formation and may promote dissociation of the complex with PARD6. EGF-induced Tyr-1127 phosphorylation mediates dissociation from LIMK2. Phosphorylation by AURKA at Ser-962 is required for the normal establishment of neuronal polarity. As to expression, isoform 1 is predominantly expressed in lung, glandular stomach, prostate, ovary and uterus. Isoform 1 is also expressed in brain, with a high expression in the cortex, hippocampus and in the striatum. Isoform 2 is predominantly expressed in intestinal epithelial cells, kidney and prostate.

It is found in the cytoplasm. The protein resides in the endomembrane system. Its subcellular location is the cell junction. It localises to the tight junction. The protein localises to the adherens junction. It is found in the cell cortex. The protein resides in the cytoskeleton. Its subcellular location is the cell membrane. Adapter protein involved in asymmetrical cell division and cell polarization processes. Seems to play a central role in the formation of epithelial tight junctions. Association with PARD6B may prevent the interaction of PARD3 with F11R/JAM1, thereby preventing tight junction assembly. The PARD6-PARD3 complex links GTP-bound Rho small GTPases to atypical protein kinase C proteins. Required for establishment of neuronal polarity and normal axon formation in cultured hippocampal neurons. Involved in Schwann cell peripheral myelination. Targets the phosphatase PTEN to cell junctions. This is Partitioning defective 3 homolog (Pard3) from Rattus norvegicus (Rat).